Reading from the N-terminus, the 473-residue chain is Sulfhydrylase-like protein lolC2 (473 aa).

An N6-(pyridoxal phosphate)lysine modification is found at K226.

Belongs to the trans-sulfuration enzymes family. Pyridoxal 5'-phosphate is required as a cofactor.

Its pathway is alkaloid biosynthesis. Its function is as follows. Sulfhydrylase-like protein; part of the gene cluster that mediates the biosynthesis of loline alkaloids, potent insecticidal agents composed of a pyrrolizidine ring system and an uncommon ether bridge linking carbons 2 and 7. Lolines are structurally differentiated by the various modifications of the L-amino group and include norloline, loline, N-methylloline, N-acetylloline, N-acetylnorloline, and N-formylloline. The first committed step is the condensation of O-acetyl-L-homoserine (derived from L-aspartic acid) and L-proline, probably catalyzed by the gamma-type pyridoxal 5'-phosphate(PLP)-dependent enzyme lolC, to give the diamino diacid, NACPP. Ensuing cyclization, decarboxylation, and acetylation steps yield 1-exo-acetamidopyrrolizidine (AcAP). LolO is required for installation of the ether bridge upon the pathway intermediate, 1-exo-acetamidopyrrolizidine (AcAP). In sequential 2-oxoglutarate- and O(2)-consuming steps, lolO removes hydrogens from C2 and C7 of AcAP to form both carbon-oxygen bonds in N-acetylnorloline (NANL), the precursor to all other lolines. The enzymes lolD, lolE, lolF and lolT have also been proposed to be involved in the ether-bridge installation. Further processing of the exocyclic moiety of NANL by fungal N-acetamidase (LolN), methyltransferase (LolM), and cytochrome P450 (LolP) enzymes, with occasional involvement of a plant acetyltransferase, generates the other known lolines. LolN transforms NANL to norlonine which is monomethylated and dimethylated to respectively lonine and N-methyllonine (NML) by lolM. LolP catalyzes hydroxylation of the methyl group in N-methylloline (NML) and further oxygenation to N-formylloline (NFL). A plant acetyltransferase is responsible for the acetylation of loline to form N-acetylloline (NAL). LolA might interact with aspartate kinase to prevent feedback inhibition of its activity by these end products and thereby promote production of L-homoserine from L-aspartate. The protein is Sulfhydrylase-like protein lolC2 of Epichloe uncinata (Endophyte fungus).